The primary structure comprises 296 residues: Ribosomal protein L11 methyltransferase (296 aa).

4 residues coordinate S-adenosyl-L-methionine: T145, G166, D188, and N230.

The protein belongs to the methyltransferase superfamily. PrmA family.

Its subcellular location is the cytoplasm. It carries out the reaction L-lysyl-[protein] + 3 S-adenosyl-L-methionine = N(6),N(6),N(6)-trimethyl-L-lysyl-[protein] + 3 S-adenosyl-L-homocysteine + 3 H(+). Its function is as follows. Methylates ribosomal protein L11. This chain is Ribosomal protein L11 methyltransferase, found in Photorhabdus laumondii subsp. laumondii (strain DSM 15139 / CIP 105565 / TT01) (Photorhabdus luminescens subsp. laumondii).